Reading from the N-terminus, the 659-residue chain is Cysteine-rich receptor-like protein kinase 18 (659 aa).

An N-terminal signal peptide occupies residues 1 to 27 (MATKSCELVLCFFVFFVISFSAISVSA). Gnk2-homologous domains follow at residues 28 to 131 (QTCD…NRPF) and 137 to 250 (MDPL…VYPF). Topologically, residues 28–287 (QTCDNTTGTF…KNDSRISGGK (260 aa)) are extracellular. N-linked (GlcNAc...) asparagine glycans are attached at residues Asn32, Asn57, Asn152, Asn162, Asn179, Asn180, Asn197, Asn275, and Asn279. A helical membrane pass occupies residues 288-308 (IAAIVVVTVVTIILVVLGFVI). Over 309–659 (SNRRKQKQEM…EATITDVNPR (351 aa)) the chain is Cytoplasmic. Residues 339–611 (FSERNKLGKG…PTMSTIHQML (273 aa)) enclose the Protein kinase domain. ATP is bound by residues 345 to 353 (LGKGGFGEV) and Lys367. Tyr412 bears the Phosphotyrosine mark. Asp464 (proton acceptor) is an active-site residue. Ser468 bears the Phosphoserine mark. A Phosphothreonine modification is found at Thr504. A Phosphotyrosine modification is found at Tyr512.

Belongs to the protein kinase superfamily. Ser/Thr protein kinase family. CRK subfamily.

The protein resides in the membrane. It catalyses the reaction L-seryl-[protein] + ATP = O-phospho-L-seryl-[protein] + ADP + H(+). The enzyme catalyses L-threonyl-[protein] + ATP = O-phospho-L-threonyl-[protein] + ADP + H(+). This chain is Cysteine-rich receptor-like protein kinase 18 (CRK18), found in Arabidopsis thaliana (Mouse-ear cress).